Here is an 85-residue protein sequence, read N- to C-terminus: UPF0335 protein Atu3758 (85 aa).

It belongs to the UPF0335 family.

The sequence is that of UPF0335 protein Atu3758 from Agrobacterium fabrum (strain C58 / ATCC 33970) (Agrobacterium tumefaciens (strain C58)).